The sequence spans 381 residues: Probable tRNA sulfurtransferase (381 aa).

The region spanning 68–176 is the THUMP domain; sequence DLALKLLKKV…NDGAYIFTEK (109 aa). Residues 194 to 195, Lys-276, Gly-298, and Gln-307 contribute to the ATP site; that span reads LI.

This sequence belongs to the ThiI family.

It localises to the cytoplasm. It catalyses the reaction [ThiI sulfur-carrier protein]-S-sulfanyl-L-cysteine + a uridine in tRNA + 2 reduced [2Fe-2S]-[ferredoxin] + ATP + H(+) = [ThiI sulfur-carrier protein]-L-cysteine + a 4-thiouridine in tRNA + 2 oxidized [2Fe-2S]-[ferredoxin] + AMP + diphosphate. It carries out the reaction [ThiS sulfur-carrier protein]-C-terminal Gly-Gly-AMP + S-sulfanyl-L-cysteinyl-[cysteine desulfurase] + AH2 = [ThiS sulfur-carrier protein]-C-terminal-Gly-aminoethanethioate + L-cysteinyl-[cysteine desulfurase] + A + AMP + 2 H(+). It participates in cofactor biosynthesis; thiamine diphosphate biosynthesis. Its function is as follows. Catalyzes the ATP-dependent transfer of a sulfur to tRNA to produce 4-thiouridine in position 8 of tRNAs, which functions as a near-UV photosensor. Also catalyzes the transfer of sulfur to the sulfur carrier protein ThiS, forming ThiS-thiocarboxylate. This is a step in the synthesis of thiazole, in the thiamine biosynthesis pathway. The sulfur is donated as persulfide by IscS. The polypeptide is Probable tRNA sulfurtransferase (Methanocaldococcus jannaschii (strain ATCC 43067 / DSM 2661 / JAL-1 / JCM 10045 / NBRC 100440) (Methanococcus jannaschii)).